Here is a 143-residue protein sequence, read N- to C-terminus: Holo-[acyl-carrier-protein] synthase (143 aa).

Residues Asp9 and Glu63 each contribute to the Mg(2+) site.

It belongs to the P-Pant transferase superfamily. AcpS family. It depends on Mg(2+) as a cofactor.

Its subcellular location is the cytoplasm. It carries out the reaction apo-[ACP] + CoA = holo-[ACP] + adenosine 3',5'-bisphosphate + H(+). Its function is as follows. Transfers the 4'-phosphopantetheine moiety from coenzyme A to a Ser of acyl-carrier-protein. This Burkholderia pseudomallei (strain 1106a) protein is Holo-[acyl-carrier-protein] synthase.